Reading from the N-terminus, the 212-residue chain is Deoxyribose-phosphate aldolase (212 aa).

Catalysis depends on aspartate 89, which acts as the Proton donor/acceptor. The active-site Schiff-base intermediate with acetaldehyde is lysine 151. Lysine 180 functions as the Proton donor/acceptor in the catalytic mechanism.

The protein belongs to the DeoC/FbaB aldolase family. DeoC type 1 subfamily.

It is found in the cytoplasm. It carries out the reaction 2-deoxy-D-ribose 5-phosphate = D-glyceraldehyde 3-phosphate + acetaldehyde. It functions in the pathway carbohydrate degradation; 2-deoxy-D-ribose 1-phosphate degradation; D-glyceraldehyde 3-phosphate and acetaldehyde from 2-deoxy-alpha-D-ribose 1-phosphate: step 2/2. Functionally, catalyzes a reversible aldol reaction between acetaldehyde and D-glyceraldehyde 3-phosphate to generate 2-deoxy-D-ribose 5-phosphate. The chain is Deoxyribose-phosphate aldolase from Clostridium botulinum (strain Kyoto / Type A2).